We begin with the raw amino-acid sequence, 115 residues long: Cytochrome c oxidase assembly protein COX16 homolog, mitochondrial (115 aa).

At 1 to 6 the chain is on the mitochondrial matrix side; the sequence is MSRLKF. Residues 7 to 29 form a helical membrane-spanning segment; it reads VRVGLPFFAIVLGSAYGLHFFQQ. Topologically, residues 30 to 115 are mitochondrial intermembrane; sequence VRFDFRKIKQ…RKVRELKSNV (86 aa).

The protein belongs to the COX16 family.

The protein resides in the mitochondrion inner membrane. In terms of biological role, required for the assembly of the mitochondrial respiratory chain complex IV (CIV), also known as cytochrome c oxidase. The chain is Cytochrome c oxidase assembly protein COX16 homolog, mitochondrial from Caenorhabditis elegans.